The primary structure comprises 63 residues: Large ribosomal subunit protein uL30 (63 aa).

The protein belongs to the universal ribosomal protein uL30 family. As to quaternary structure, part of the 50S ribosomal subunit.

This is Large ribosomal subunit protein uL30 from Geobacillus stearothermophilus (Bacillus stearothermophilus).